Consider the following 529-residue polypeptide: Alkaline phosphatase, germ cell type (529 aa).

Residues 1-18 (MWGACLLLLGLSLQVCPS) form the signal peptide. A Mg(2+)-binding site is contributed by Asp60. Residues Asp60 and Ser110 each contribute to the Zn(2+) site. Ser110 serves as the catalytic Phosphoserine intermediate. Cysteines 139 and 201 form a disulfide. The N-linked (GlcNAc...) asparagine glycan is linked to Asn140. Residue Ser173 participates in Mg(2+) binding. Residue Glu234 participates in Ca(2+) binding. Residues Asn267 and Asn277 are each glycosylated (N-linked (GlcNAc...) asparagine). Residues Phe287, Glu288, and Asp303 each coordinate Ca(2+). Glu329 provides a ligand contact to Mg(2+). Residues Asp334, His338, Asp375, His376, and His450 each contribute to the Zn(2+) site. An intrachain disulfide couples Cys485 to Cys492. Residue Ser502 is the site of GPI-anchor amidated serine attachment. The propeptide at 503–529 (AVSPGYMSTLLCLLAGKMLMLMAAAEP) is removed in mature form.

The protein belongs to the alkaline phosphatase family. Homodimer. The cofactor is Mg(2+). Zn(2+) serves as cofactor. It depends on Ca(2+) as a cofactor. Embryo and testis.

The protein localises to the cell membrane. The enzyme catalyses a phosphate monoester + H2O = an alcohol + phosphate. With respect to regulation, inhibited by L-leucine, EDTA and heat. Functionally, alkaline phosphatase that can hydrolyze various phosphate compounds. The sequence is that of Alkaline phosphatase, germ cell type (Alpg) from Mus musculus (Mouse).